The following is a 499-amino-acid chain: Probable cytosol aminopeptidase (499 aa).

Mn(2+)-binding residues include Lys-269 and Asp-274. Lys-281 is an active-site residue. Mn(2+)-binding residues include Asp-292, Asp-351, and Glu-353. Arg-355 is a catalytic residue.

Belongs to the peptidase M17 family. It depends on Mn(2+) as a cofactor.

Its subcellular location is the cytoplasm. The enzyme catalyses Release of an N-terminal amino acid, Xaa-|-Yaa-, in which Xaa is preferably Leu, but may be other amino acids including Pro although not Arg or Lys, and Yaa may be Pro. Amino acid amides and methyl esters are also readily hydrolyzed, but rates on arylamides are exceedingly low.. The catalysed reaction is Release of an N-terminal amino acid, preferentially leucine, but not glutamic or aspartic acids.. In terms of biological role, presumably involved in the processing and regular turnover of intracellular proteins. Catalyzes the removal of unsubstituted N-terminal amino acids from various peptides. This chain is Probable cytosol aminopeptidase, found in Actinobacillus pleuropneumoniae serotype 3 (strain JL03).